The chain runs to 112 residues: Ferredoxin, plant-type (112 aa).

A 2Fe-2S ferredoxin-type domain is found at 6 to 97; the sequence is YEVFEVLSGQ…DLTIEYFRHV (92 aa). 4 residues coordinate [2Fe-2S] cluster: C41, C46, C49, and C81.

Belongs to the 2Fe2S plant-type ferredoxin family.

The protein operates within aromatic compound metabolism; catechol degradation. Its function is as follows. Ferredoxins are iron-sulfur proteins that transfer electrons in a wide variety of metabolic reactions. This chain is Ferredoxin, plant-type (xylT), found in Pseudomonas putida (Arthrobacter siderocapsulatus).